A 581-amino-acid chain; its full sequence is A-type ATP synthase subunit A (581 aa).

Position 232–239 (232–239) interacts with ATP; the sequence is GPFGSGKT.

It belongs to the ATPase alpha/beta chains family. Has multiple subunits with at least A(3), B(3), C, D, E, F, H, I and proteolipid K(x).

Its subcellular location is the cell membrane. It catalyses the reaction ATP + H2O + 4 H(+)(in) = ADP + phosphate + 5 H(+)(out). Component of the A-type ATP synthase that produces ATP from ADP in the presence of a proton gradient across the membrane. The A chain is the catalytic subunit. The protein is A-type ATP synthase subunit A of Methanocorpusculum labreanum (strain ATCC 43576 / DSM 4855 / Z).